A 379-amino-acid chain; its full sequence is Lipid-A-disaccharide synthase (379 aa).

It belongs to the LpxB family.

It carries out the reaction a lipid X + a UDP-2-N,3-O-bis[(3R)-3-hydroxyacyl]-alpha-D-glucosamine = a lipid A disaccharide + UDP + H(+). It participates in bacterial outer membrane biogenesis; LPS lipid A biosynthesis. In terms of biological role, condensation of UDP-2,3-diacylglucosamine and 2,3-diacylglucosamine-1-phosphate to form lipid A disaccharide, a precursor of lipid A, a phosphorylated glycolipid that anchors the lipopolysaccharide to the outer membrane of the cell. In Idiomarina loihiensis (strain ATCC BAA-735 / DSM 15497 / L2-TR), this protein is Lipid-A-disaccharide synthase.